A 463-amino-acid polypeptide reads, in one-letter code: Asparagine--tRNA ligase (463 aa).

Belongs to the class-II aminoacyl-tRNA synthetase family. Homodimer.

It is found in the cytoplasm. The enzyme catalyses tRNA(Asn) + L-asparagine + ATP = L-asparaginyl-tRNA(Asn) + AMP + diphosphate + H(+). The sequence is that of Asparagine--tRNA ligase from Clostridium botulinum (strain ATCC 19397 / Type A).